The sequence spans 162 residues: Ribosome maturation factor RimP (162 aa).

The protein belongs to the RimP family.

The protein resides in the cytoplasm. Functionally, required for maturation of 30S ribosomal subunits. The chain is Ribosome maturation factor RimP from Ralstonia nicotianae (strain ATCC BAA-1114 / GMI1000) (Ralstonia solanacearum).